Here is a 72-residue protein sequence, read N- to C-terminus: Alpha-elapitoxin-Djk2a (72 aa).

5 disulfide bridges follow: C3-C21, C14-C42, C27-C31, C46-C57, and C58-C63.

This sequence belongs to the three-finger toxin family. Long-chain subfamily. Type II alpha-neurotoxin sub-subfamily. Expressed by the venom gland.

It localises to the secreted. In terms of biological role, binds with high affinity to muscular (alpha-1/CHRNA1) and neuronal (alpha-7/CHRNA7) nicotinic acetylcholine receptor (nAChR) and inhibits acetylcholine from binding to the receptor, thereby impairing neuromuscular and neuronal transmission. The polypeptide is Alpha-elapitoxin-Djk2a (Dendroaspis jamesoni kaimosae (Eastern Jameson's mamba)).